The following is a 148-amino-acid chain: MLDRIDLKILRILNGNARKSFREIGRELGISEGTVRNRVKRLTEKGIITGFHASINPKNLGFEVVAILGLYIKPSKVEETLNKLKELDEIVELYQTTGEYDAVCIAILKDIESLGKFLAEKIYPLVNVNGCKVTLVLRTFKDGSKMPI.

In terms of domain architecture, HTH asnC-type spans 2 to 63; it reads LDRIDLKILR…SINPKNLGFE (62 aa). Positions 21–40 form a DNA-binding region, H-T-H motif; that stretch reads FREIGRELGISEGTVRNRVK.

Homodimer.

Participates in positive as well as negative regulation of transcription. Binds to its own promoter. The sequence is that of HTH-type transcriptional regulator Ptr1 (ptr1) from Methanocaldococcus jannaschii (strain ATCC 43067 / DSM 2661 / JAL-1 / JCM 10045 / NBRC 100440) (Methanococcus jannaschii).